A 482-amino-acid chain; its full sequence is Membrane-bound lytic murein transglycosylase F (482 aa).

An N-terminal signal peptide occupies residues 1-13 (MKGLFLRIITALA). The non-LT domain stretch occupies residues 14–267 (LLFWAIDMVF…NLKEKYLGHI (254 aa)). Residues 268 to 482 (SQFDYVDTRS…NLEEIKENKD (215 aa)) are LT domain. Glutamate 312 is a catalytic residue.

In the N-terminal section; belongs to the bacterial solute-binding protein 3 family. The protein in the C-terminal section; belongs to the transglycosylase Slt family.

It localises to the cell outer membrane. The catalysed reaction is Exolytic cleavage of the (1-&gt;4)-beta-glycosidic linkage between N-acetylmuramic acid (MurNAc) and N-acetylglucosamine (GlcNAc) residues in peptidoglycan, from either the reducing or the non-reducing ends of the peptidoglycan chains, with concomitant formation of a 1,6-anhydrobond in the MurNAc residue.. Functionally, murein-degrading enzyme that degrades murein glycan strands and insoluble, high-molecular weight murein sacculi, with the concomitant formation of a 1,6-anhydromuramoyl product. Lytic transglycosylases (LTs) play an integral role in the metabolism of the peptidoglycan (PG) sacculus. Their lytic action creates space within the PG sacculus to allow for its expansion as well as for the insertion of various structures such as secretion systems and flagella. In Haemophilus influenzae (strain PittEE), this protein is Membrane-bound lytic murein transglycosylase F.